The primary structure comprises 99 residues: Protein translation factor SUI1 homolog (99 aa).

Belongs to the SUI1 family.

This chain is Protein translation factor SUI1 homolog, found in Pyrococcus horikoshii (strain ATCC 700860 / DSM 12428 / JCM 9974 / NBRC 100139 / OT-3).